Here is a 157-residue protein sequence, read N- to C-terminus: Nucleoside diphosphate kinase (157 aa).

Residues lysine 12, phenylalanine 60, arginine 88, threonine 94, and arginine 105 each contribute to the ATP site. Catalysis depends on histidine 121, which acts as the Pros-phosphohistidine intermediate.

Belongs to the NDK family. The cofactor is Mg(2+).

The protein resides in the cytoplasm. The enzyme catalyses a 2'-deoxyribonucleoside 5'-diphosphate + ATP = a 2'-deoxyribonucleoside 5'-triphosphate + ADP. It carries out the reaction a ribonucleoside 5'-diphosphate + ATP = a ribonucleoside 5'-triphosphate + ADP. Its function is as follows. Major role in the synthesis of nucleoside triphosphates other than ATP. The ATP gamma phosphate is transferred to the NDP beta phosphate via a ping-pong mechanism, using a phosphorylated active-site intermediate. This is Nucleoside diphosphate kinase from Pyrococcus horikoshii (strain ATCC 700860 / DSM 12428 / JCM 9974 / NBRC 100139 / OT-3).